The following is a 220-amino-acid chain: Uracil-DNA glycosylase (220 aa).

Aspartate 65 (proton acceptor) is an active-site residue.

The protein belongs to the uracil-DNA glycosylase (UDG) superfamily. UNG family.

The protein resides in the cytoplasm. It catalyses the reaction Hydrolyzes single-stranded DNA or mismatched double-stranded DNA and polynucleotides, releasing free uracil.. In terms of biological role, excises uracil residues from the DNA which can arise as a result of misincorporation of dUMP residues by DNA polymerase or due to deamination of cytosine. In Leuconostoc mesenteroides subsp. mesenteroides (strain ATCC 8293 / DSM 20343 / BCRC 11652 / CCM 1803 / JCM 6124 / NCDO 523 / NBRC 100496 / NCIMB 8023 / NCTC 12954 / NRRL B-1118 / 37Y), this protein is Uracil-DNA glycosylase.